The chain runs to 1263 residues: Kinesin-like protein KIN-12E (1263 aa).

The segment at 21–44 (PAPSESLRSVPCTPEANTVSRDNH) is disordered. Positions 35-44 (EANTVSRDNH) are enriched in polar residues. The Kinesin motor domain occupies 93–430 (NVQVIIRTRP…LKFAQRAKLI (338 aa)). ATP is bound at residue 174–181 (GQTGSGKT). Coiled coils occupy residues 679-737 (SKKL…KIRS), 764-805 (AEAH…AEEN), 831-881 (ALEV…KRLL), 905-966 (SEKS…HQSE), 1091-1168 (TDLL…TIQE), and 1193-1251 (LRKE…VLSL).

This sequence belongs to the TRAFAC class myosin-kinesin ATPase superfamily. Kinesin family. KIN-12 subfamily.

This Arabidopsis thaliana (Mouse-ear cress) protein is Kinesin-like protein KIN-12E.